Reading from the N-terminus, the 90-residue chain is Small ribosomal subunit protein uS15c (90 aa).

This sequence belongs to the universal ribosomal protein uS15 family. Part of the 30S ribosomal subunit.

The protein localises to the plastid. The protein resides in the chloroplast. The polypeptide is Small ribosomal subunit protein uS15c (rps15-A) (Brachypodium distachyon (Purple false brome)).